The primary structure comprises 119 residues: Large ribosomal subunit protein bL20 (119 aa).

It belongs to the bacterial ribosomal protein bL20 family.

Functionally, binds directly to 23S ribosomal RNA and is necessary for the in vitro assembly process of the 50S ribosomal subunit. It is not involved in the protein synthesizing functions of that subunit. The chain is Large ribosomal subunit protein bL20 from Clostridium acetobutylicum (strain ATCC 824 / DSM 792 / JCM 1419 / IAM 19013 / LMG 5710 / NBRC 13948 / NRRL B-527 / VKM B-1787 / 2291 / W).